Reading from the N-terminus, the 375-residue chain is Antichymotrypsin-2 (375 aa).

This sequence belongs to the serpin family. Hemolymph.

It is found in the secreted. The chain is Antichymotrypsin-2 from Bombyx mori (Silk moth).